The chain runs to 398 residues: Selenide, water dikinase (398 aa).

The segment at methionine 1–threonine 21 is disordered. Cysteine 46 is an active-site residue. Residues lysine 49, glycine 72–aspartate 74, aspartate 97, aspartate 120, and glycine 171–threonine 174 each bind ATP. Aspartate 74 serves as a coordination point for Mg(2+). Residue aspartate 120 coordinates Mg(2+). Residue aspartate 278 participates in Mg(2+) binding.

The protein belongs to the selenophosphate synthase 1 family. Class I subfamily. Homodimer. Requires Mg(2+) as cofactor.

It catalyses the reaction hydrogenselenide + ATP + H2O = selenophosphate + AMP + phosphate + 2 H(+). Functionally, synthesizes selenophosphate from selenide and ATP. The polypeptide is Selenide, water dikinase (Leishmania major).